A 343-amino-acid polypeptide reads, in one-letter code: L-threonine 3-dehydrogenase (343 aa).

A Zn(2+)-binding site is contributed by Cys40. Residues Thr42 and His45 each act as charge relay system in the active site. Zn(2+) is bound by residues His65, Glu66, Cys95, Cys98, Cys101, and Cys109. NAD(+) is bound by residues Ile177, Asp197, Arg202, 264 to 266, and 288 to 289; these read LGI and IY.

It belongs to the zinc-containing alcohol dehydrogenase family. In terms of assembly, homotetramer. The cofactor is Zn(2+).

The protein resides in the cytoplasm. It catalyses the reaction L-threonine + NAD(+) = (2S)-2-amino-3-oxobutanoate + NADH + H(+). Its pathway is amino-acid degradation; L-threonine degradation via oxydo-reductase pathway; glycine from L-threonine: step 1/2. Functionally, catalyzes the NAD(+)-dependent oxidation of L-threonine to 2-amino-3-ketobutyrate. The polypeptide is L-threonine 3-dehydrogenase (Vibrio vulnificus (strain CMCP6)).